The chain runs to 798 residues: Integrin beta-1 (798 aa).

Residues 1–20 form the signal peptide; sequence MNLQPIFWIGLISSICCVFA. Residues 26 to 76 form the PSI domain; it reads RCLKANAKSCGECIQAGPNCGWCTNSTFLQEGMPTSARCDDLEALKKKGCP. Cystine bridges form between Cys-27/Cys-45, Cys-35/Cys-464, Cys-38/Cys-64, Cys-48/Cys-75, Cys-207/Cys-213, Cys-261/Cys-301, Cys-401/Cys-415, Cys-435/Cys-462, Cys-466/Cys-486, Cys-477/Cys-489, Cys-491/Cys-500, Cys-502/Cys-533, Cys-516/Cys-531, Cys-525/Cys-536, Cys-538/Cys-553, Cys-555/Cys-576, Cys-560/Cys-574, Cys-568/Cys-579, Cys-581/Cys-590, Cys-592/Cys-615, Cys-599/Cys-613, Cys-607/Cys-618, Cys-620/Cys-630, Cys-633/Cys-636, Cys-640/Cys-691, Cys-646/Cys-665, Cys-649/Cys-661, and Cys-699/Cys-723. A glycan (N-linked (GlcNAc...) asparagine) is linked at Asn-50. The segment at 75-107 is disordered; it reads CPPDDIENPRGSKDIKKNKNVTNRSKGTAEKLK. The span at 81 to 91 shows a compositional bias: basic and acidic residues; sequence ENPRGSKDIKK. Residues Asn-94 and Asn-97 are each glycosylated (N-linked (GlcNAc...) asparagine). Positions 140 to 378 constitute a VWFA domain; that stretch reads DYPIDLYYLM…QLIIDAYNSL (239 aa). Ser-152 and Ser-154 together coordinate Mg(2+). Ca(2+) is bound by residues Ser-154, Asp-157, Asp-158, and Glu-189. The interval 207 to 213 is CX3CL1-binding; it reads CTSEQNC. A glycan (N-linked (GlcNAc...) asparagine) is linked at Asn-212. Asn-244, Asp-246, Pro-248, and Glu-249 together coordinate Ca(2+). Mg(2+) is bound at residue Glu-249. A glycan (N-linked (GlcNAc...) asparagine) is linked at Asn-269. The segment at 295–314 is CX3CL1-binding; it reads LPNDGQCHLENNMYTMSHYY. Ala-362 contributes to the Ca(2+) binding site. N-linked (GlcNAc...) asparagine glycans are attached at residues Asn-363, Asn-406, and Asn-417. The tract at residues 383-465 is interaction with TMEM182; that stretch reads ILENSKLSEG…VILQYICECE (83 aa). I-EGF domains follow at residues 466–501, 502–554, 555–591, and 592–631; these read CQSE…RHCE, CSTD…KFCE, CDNF…SACD, and CSLD…QTCE. An N-linked (GlcNAc...) asparagine glycan is attached at Asn-481. N-linked (GlcNAc...) asparagine glycosylation occurs at Asn-520. Asn-584 is a glycosylation site (N-linked (GlcNAc...) asparagine). Residue Asn-669 is glycosylated (N-linked (GlcNAc...) asparagine). The chain crosses the membrane as a helical span at residues 729 to 749; sequence IIPIVAGVVAGIVLIGLALLL. The interval 762 to 767 is signal for sorting from recycling endosomes; interaction with ACAP1; it reads EFAKFE. At Thr-777 the chain carries Phosphothreonine. Tyr-783 carries the phosphotyrosine modification. Ser-785 bears the Phosphoserine mark. The interval 785 to 792 is interaction with ITGB1BP1; that stretch reads SAVTTVVN. At Thr-789 the chain carries Phosphothreonine. Lys-794 carries the N6-acetyllysine; alternate modification. Lys-794 participates in a covalent cross-link: Glycyl lysine isopeptide (Lys-Gly) (interchain with G-Cter in SUMO1); alternate.

It belongs to the integrin beta chain family. In terms of assembly, interacts with seprase FAP (seprase); the interaction occurs at the cell surface of invadopodia membrane in a collagen-dependent manner. Heterodimer of an alpha and a beta subunit. Beta-1 associates with either alpha-1, alpha-2, alpha-3, alpha-4, alpha-5, alpha-6, alpha-7, alpha-8, alpha-9, alpha-10, alpha-11 or alpha-V. ITGA6:ITGB1 is found in a complex with CD9; interaction takes place in oocytes and is involved in sperm-egg fusion. Binds LGALS3BP and NMRK2, when associated with alpha-7, but not with alpha-5. Interacts with FLNA, FLNB, FLNC and RANBP9. Interacts with KRT1 in the presence of RACK1 and SRC. Interacts with JAML; integrin alpha-4/beta-1 may regulate leukocyte to endothelial cells adhesion by controlling JAML homodimerization. Interacts with RAB21. Interacts (via the cytoplasmic region) with RAB25 (via the hypervariable C-terminal region). Interacts with MYO10. Interacts with ITGB1BP1 (via C-terminal region); the interaction is a prerequisite for focal adhesion disassembly. Interacts with TLN1; the interaction is prevented by competitive binding of ITGB1BP1. Interacts with ACAP1; required for ITGB1 recycling. Interacts with ASAP3. Interacts with FERMT2; the interaction is inhibited in presence of ITGB1BP1. Interacts with DAB2. Interacts with FGR and HCK. Interacts with alpha-7A and alpha-7B in adult skeletal muscle. Interacts with alpha-7B in cardiomyocytes of adult heart. Interacts with EMP2; the interaction may be direct or indirect and ITGB1 has a heterodimer form. ITGA5:ITGB1 interacts with CCN3. ITGA4:ITGB1 is found in a ternary complex with CX3CR1 and CX3CL1. ITGA5:ITGB1 interacts with FBN1. ITGA5:ITGB1 acts as a receptor for fibronectin FN1 and mediates R-G-D-dependent cell adhesion to FN1. ITGA5:ITGB1 interacts with IL1B. Interacts with MDK. ITGA4:ITGB1 interacts with MDK; this interaction mediates MDK-induced osteoblast cells migration through PXN phosphorylation. ITGA6:ITGB1 interacts with MDK; this interaction mediates MDK-induced neurite-outgrowth. ITGA5:ITGB1 interacts with ACE2. Interacts with TMEM182 and LAMB1. Interacts with tensin TNS3; TNS3 also interacts with PEAK1, thus acting as an adapter molecule to bridge the association of PEAK1 with ITGB1. Interacts with tensin TNS4; the interaction displaces tensin TNS3 from the ITGB1 cytoplasmic tail and promotes ITGB1 stability. Integrin ITGA9:ITGB1 interacts with SPP1/OPN (via N-terminus). Integrin ITGA9:ITGB1 interacts with TNC/TNFN3 (via the 3rd Fibronectin type-III domain). Integrins ITGA4:ITGB1 and ITGA9:ITGB1 interact with SVEP1 (via Sushi domain 21); thereby inhibit Ca(2+) intracellular signaling and as a result repress vasocontraction. ITGA4:ITGB1 and ITGA5:ITGB1 interacts with SELP. Interacts with CD248. ITGA5:ITGB1 interacts with IGFBP1. ITGA4:ITGB1 interacts with BCAM. Interacts with ADGRG6.

The protein localises to the cell membrane. It localises to the cell projection. Its subcellular location is the invadopodium membrane. It is found in the ruffle membrane. The protein resides in the recycling endosome. The protein localises to the melanosome. It localises to the lamellipodium. Its subcellular location is the ruffle. It is found in the cell junction. The protein resides in the focal adhesion. Its function is as follows. Integrins alpha-1/beta-1, alpha-2/beta-1, alpha-10/beta-1 and alpha-11/beta-1 are receptors for collagen. Integrins alpha-1/beta-1 and alpha-2/beta-2 recognize the proline-hydroxylated sequence G-F-P-G-E-R in collagen. Integrins alpha-2/beta-1, alpha-3/beta-1, alpha-4/beta-1, alpha-5/beta-1, alpha-8/beta-1, alpha-10/beta-1, alpha-11/beta-1 and alpha-V/beta-1 are receptors for fibronectin. Alpha-4/beta-1 recognizes one or more domains within the alternatively spliced CS-1 and CS-5 regions of fibronectin. Integrin alpha-5/beta-1 is a receptor for fibrinogen. Integrin alpha-1/beta-1, alpha-2/beta-1, alpha-6/beta-1 and alpha-7/beta-1 are receptors for lamimin. Integrin alpha-6/beta-1 (ITGA6:ITGB1) is present in oocytes and is involved in sperm-egg fusion. Integrin alpha-4/beta-1 is a receptor for VCAM1 and recognizes the sequence Q-I-D-S in VCAM1. Integrin alpha-9/beta-1 is a receptor for VCAM1, cytotactin and osteopontin. It recognizes the sequence A-E-I-D-G-I-E-L in cytotactin. Integrin alpha-3/beta-1 is a receptor for epiligrin, thrombospondin and CSPG4. Integrin alpha-3/beta-1 provides a docking site for FAP (seprase) at invadopodia plasma membranes in a collagen-dependent manner and hence may participate in the adhesion, formation of invadopodia and matrix degradation processes, promoting cell invasion. Alpha-3/beta-1 may mediate with LGALS3 the stimulation by CSPG4 of endothelial cells migration. Integrin alpha-V/beta-1 is a receptor for vitronectin. Beta-1 integrins recognize the sequence R-G-D in a wide array of ligands. When associated with alpha-7/beta-1 integrin, regulates cell adhesion and laminin matrix deposition. Involved in promoting endothelial cell motility and angiogenesis. Involved in osteoblast compaction through the fibronectin fibrillogenesis cell-mediated matrix assembly process and the formation of mineralized bone nodules. May be involved in up-regulation of the activity of kinases such as PKC via binding to KRT1. Together with KRT1 and RACK1, serves as a platform for SRC activation or inactivation. Plays a mechanistic adhesive role during telophase, required for the successful completion of cytokinesis. ITGA4:ITGB1 binds to fractalkine (CX3CL1) and may act as its coreceptor in CX3CR1-dependent fractalkine signaling. ITGA4:ITGB1 and ITGA5:ITGB1 bind to PLA2G2A via a site (site 2) which is distinct from the classical ligand-binding site (site 1) and this induces integrin conformational changes and enhanced ligand binding to site 1. ITGA5:ITGB1 acts as a receptor for fibrillin-1 (FBN1) and mediates R-G-D-dependent cell adhesion to FBN1. ITGA5:ITGB1 is a receptor for IL1B and binding is essential for IL1B signaling. ITGA5:ITGB3 is a receptor for soluble CD40LG and is required for CD40/CD40LG signaling. Plays an important role in myoblast differentiation and fusion during skeletal myogenesis. ITGA9:ITGB1 may play a crucial role in SVEP1/polydom-mediated myoblast cell adhesion. Integrins ITGA9:ITGB1 and ITGA4:ITGB1 repress PRKCA-mediated L-type voltage-gated channel Ca(2+) influx and ROCK-mediated calcium sensitivity in vascular smooth muscle cells via their interaction with SVEP1, thereby inhibit vasocontraction. This chain is Integrin beta-1 (ITGB1), found in Pongo abelii (Sumatran orangutan).